A 326-amino-acid chain; its full sequence is Malate dehydrogenase (326 aa).

Position 12–18 (12–18 (GGTGQIA)) interacts with NAD(+). Residues arginine 93 and arginine 99 each contribute to the substrate site. NAD(+) is bound by residues asparagine 106, glutamine 113, and 130–132 (VGN). Substrate is bound by residues asparagine 132 and arginine 163. Residue histidine 188 is the Proton acceptor of the active site.

The protein belongs to the LDH/MDH superfamily. MDH type 2 family.

The enzyme catalyses (S)-malate + NAD(+) = oxaloacetate + NADH + H(+). Its function is as follows. Catalyzes the reversible oxidation of malate to oxaloacetate. The polypeptide is Malate dehydrogenase (Chlamydia trachomatis serovar D (strain ATCC VR-885 / DSM 19411 / UW-3/Cx)).